The primary structure comprises 253 residues: Ubiquinone biosynthesis O-methyltransferase (253 aa).

Positions 41, 72, 93, and 136 each coordinate S-adenosyl-L-methionine.

This sequence belongs to the methyltransferase superfamily. UbiG/COQ3 family.

It catalyses the reaction a 3-demethylubiquinol + S-adenosyl-L-methionine = a ubiquinol + S-adenosyl-L-homocysteine + H(+). The catalysed reaction is a 3-(all-trans-polyprenyl)benzene-1,2-diol + S-adenosyl-L-methionine = a 2-methoxy-6-(all-trans-polyprenyl)phenol + S-adenosyl-L-homocysteine + H(+). Its pathway is cofactor biosynthesis; ubiquinone biosynthesis. Its function is as follows. O-methyltransferase that catalyzes the 2 O-methylation steps in the ubiquinone biosynthetic pathway. This is Ubiquinone biosynthesis O-methyltransferase from Chelativorans sp. (strain BNC1).